The chain runs to 86 residues: Curamycin polyketide synthase acyl carrier protein (86 aa).

In terms of domain architecture, Carrier spans 7–86 (QVTVEELATL…VVNGALASGA (80 aa)). S44 is modified (O-(pantetheine 4'-phosphoryl)serine).

Post-translationally, 4'-phosphopantetheine is transferred from CoA to a specific serine of the apo-ACP-like protein.

The protein operates within antibiotic biosynthesis; curamycin biosynthesis. Functionally, acyl carrier protein. The sequence is that of Curamycin polyketide synthase acyl carrier protein (curE) from Streptomyces cyaneus (Streptomyces curacoi).